The following is a 387-amino-acid chain: MEQVVIVDAIRTPMGRSKGGAFRNVRAEDLSAHLMRSLLARNPALEAAALDDIYWGCVQQTLEQGFNIARNAALLAEVPHSVPAVTVNRLCGSSMQALHDAARMIMTGDAQACLVGGVEHMGHVPMSHGVDFHPGLSRNVAKAAGMMGLTAEMLARMHGISREMQDAFAARSHARAWAATQSGAFKNEIIPTGGHDADGVLKQFNYDEVIRPETTVEALATLRPAFDPVSGTVTAGTSSALSDGAAAMLVMSESRARDLGLKPRACVRSMAVVGCDPSIMGYGPVPASKLALKKAGLSASDIGVFEMNEAFAAQILPCIKDLGLMEQIDEKINLNGGAIALGHPLGCSGARISTTLLNLMERKDVQFGLATMCIGLGQGIATVFERV.

Cys91 functions as the Acyl-thioester intermediate in the catalytic mechanism. Catalysis depends on proton acceptor residues His343 and Cys373.

The protein belongs to the thiolase-like superfamily. Thiolase family. As to quaternary structure, heterotetramer of two alpha chains (FadB) and two beta chains (FadA).

The protein resides in the cytoplasm. The catalysed reaction is an acyl-CoA + acetyl-CoA = a 3-oxoacyl-CoA + CoA. It functions in the pathway lipid metabolism; fatty acid beta-oxidation. In terms of biological role, catalyzes the final step of fatty acid oxidation in which acetyl-CoA is released and the CoA ester of a fatty acid two carbons shorter is formed. Involved in the aerobic and anaerobic degradation of long-chain fatty acids. The polypeptide is 3-ketoacyl-CoA thiolase (Escherichia coli O6:H1 (strain CFT073 / ATCC 700928 / UPEC)).